The primary structure comprises 1141 residues: Myosin-binding protein C, slow-type (1141 aa).

Positions 1 to 10 (MPEPTKKEEN) are enriched in basic and acidic residues. Positions 1 to 51 (MPEPTKKEENEVPAPAPPPEEPSKEKEAGTTPAKDWTLVETPPGEEQAKQN) are disordered. Ig-like C2-type domains follow at residues 72-144 (GEDI…RCEV), 251-340 (SAAF…VREP), 341-431 (PIMV…VDLK), 432-520 (PLKI…HVID), and 522-619 (PKII…VVDF). A Phosphothreonine modification is found at Thr406. Ser611 bears the Phosphoserine mark. Fibronectin type-III domains lie at 622–721 (PPVA…TSPP) and 722–833 (TLLT…VKEI). Thr798 bears the Phosphothreonine mark. Tyr823 carries the post-translational modification Phosphotyrosine. The 95-residue stretch at 837–931 (PKIRIPRHLK…ASIDIQIIDR (95 aa)) folds into the Ig-like C2-type 6 domain. A Fibronectin type-III 3 domain is found at 934 to 1029 (PPQIVKIEDV…TKESAVIARD (96 aa)). Positions 1047 to 1141 (PMFTQPLVNT…CKLEVKVIAQ (95 aa)) constitute an Ig-like C2-type 7 domain.

It belongs to the immunoglobulin superfamily. MyBP family. As to quaternary structure, interacts with USP25 (isoform USP25m only); the interaction prevents proteasomal degradation of MYBPC1.

Functionally, thick filament-associated protein located in the crossbridge region of vertebrate striated muscle a bands. Slow skeletal protein that binds to both myosin and actin. In vitro, binds to native thin filaments and modifies the activity of actin-activated myosin ATPase. May modulate muscle contraction or may play a more structural role. The protein is Myosin-binding protein C, slow-type (MYBPC1) of Homo sapiens (Human).